Reading from the N-terminus, the 1432-residue chain is DNA-directed RNA polymerase subunit beta (1432 aa).

Belongs to the RNA polymerase beta chain family. In terms of assembly, the RNAP catalytic core consists of 2 alpha, 1 beta, 1 beta' and 1 omega subunit. When a sigma factor is associated with the core the holoenzyme is formed, which can initiate transcription.

The catalysed reaction is RNA(n) + a ribonucleoside 5'-triphosphate = RNA(n+1) + diphosphate. In terms of biological role, DNA-dependent RNA polymerase catalyzes the transcription of DNA into RNA using the four ribonucleoside triphosphates as substrates. This Solibacter usitatus (strain Ellin6076) protein is DNA-directed RNA polymerase subunit beta.